A 331-amino-acid chain; its full sequence is Polysaccharide lyase (331 aa).

The first 22 residues, 1–22 (MSLPLRLALLPTLLASASAFAA), serve as a signal peptide directing secretion. A lipid anchor (N-palmitoyl cysteine) is attached at Cys-23. A lipid anchor (S-diacylglycerol cysteine) is attached at Cys-23.

This sequence belongs to the polysaccharide lyase 5 family.

It is found in the cell outer membrane. The catalysed reaction is Eliminative cleavage of alginate to give oligosaccharides with 4-deoxy-alpha-L-erythro-hex-4-enuronosyl groups at their non-reducing ends and beta-D-mannuronate at their reducing end.. It catalyses the reaction [hyaluronan](n) = n 3-(4-deoxy-beta-D-gluc-4-enuronosyl)-N-acetyl-D-glucosamine + H2O. It carries out the reaction Eliminative cleavage of (1-&gt;4)-beta-D-glucuronans to give oligosaccharides with 4-deoxy-beta-D-gluc-4-enuronosyl groups at their non-reducing ends. Complete degradation of glucuronans results in the formation of tetrasaccharides.. With respect to regulation, is inhibited by mono- and divalent cations as well as L-ascorbic acid 6-hexadecanoate. In terms of biological role, polysaccharide lyase that catalyzes the depolymerization of several anionic polysaccharides via a beta-elimination mechanism. Exhibits broad substrate specificity, catalyzing the degradation of not only alginate and poly-beta-D-mannuronate (poly-ManA), but poly-beta-D-glucuronate (poly-GlcA or poly-GlcUA) and hyaluronate (HA) as well. The oligosaccharide products formed by enzymatic cleavage are comprised mainly of disaccharides, with a lower abundance of trimers and pentamers. Is not active on poly-D-galacturonate, heparin and heparin sulfate. This chain is Polysaccharide lyase, found in Stenotrophomonas maltophilia (strain K279a).